Reading from the N-terminus, the 460-residue chain is tRNA modification GTPase MnmE (460 aa).

(6S)-5-formyl-5,6,7,8-tetrahydrofolate-binding residues include Arg23, Glu86, and Arg126. A TrmE-type G domain is found at 222–381 (GLSTAIIGRP…LEAAIASLFF (160 aa)). K(+) is bound at residue Asn232. GTP-binding positions include 232 to 237 (NVGKSS), 251 to 257 (TDIAGTT), and 276 to 279 (DTAG). Ser236 is a Mg(2+) binding site. The K(+) site is built by Thr251, Ile253, and Thr256. Thr257 lines the Mg(2+) pocket. Residue Lys460 participates in (6S)-5-formyl-5,6,7,8-tetrahydrofolate binding.

It belongs to the TRAFAC class TrmE-Era-EngA-EngB-Septin-like GTPase superfamily. TrmE GTPase family. In terms of assembly, homodimer. Heterotetramer of two MnmE and two MnmG subunits. K(+) is required as a cofactor.

It is found in the cytoplasm. Functionally, exhibits a very high intrinsic GTPase hydrolysis rate. Involved in the addition of a carboxymethylaminomethyl (cmnm) group at the wobble position (U34) of certain tRNAs, forming tRNA-cmnm(5)s(2)U34. In Exiguobacterium sibiricum (strain DSM 17290 / CCUG 55495 / CIP 109462 / JCM 13490 / 255-15), this protein is tRNA modification GTPase MnmE.